The chain runs to 147 residues: MLMRSDPFRELDRLTNQVLGTPTRPAVMPMDAWRVGRRLVVEFDLPGIDAESLDIDIERNVLTVRAERPALDPNREMLATERPRGVFSRELVLGDNLDTDKIEASYRDGVLSLHIPVDEKARPRKIAVGAARHPEPSPKTAREVVNA.

The sHSP domain occupies 21 to 131 (TPTRPAVMPM…RPRKIAVGAA (111 aa)).

The protein belongs to the small heat shock protein (HSP20) family.

Functionally, not known. This protein is one of the major immune reactive proteins in mycobacteria. This Mycobacterium avium protein is 18 kDa antigen 1.